The sequence spans 193 residues: dCTP deaminase (193 aa).

DCTP contacts are provided by residues 110–115 (RSSLAR), aspartate 128, 136–138 (VLE), tyrosine 171, lysine 178, and glutamine 182. Glutamate 138 acts as the Proton donor/acceptor in catalysis. The segment at 171 to 193 (YNKRKNAKYKDQQDAVASRISQD) is disordered.

It belongs to the dCTP deaminase family. As to quaternary structure, homotrimer.

The enzyme catalyses dCTP + H2O + H(+) = dUTP + NH4(+). Its pathway is pyrimidine metabolism; dUMP biosynthesis; dUMP from dCTP (dUTP route): step 1/2. Its function is as follows. Catalyzes the deamination of dCTP to dUTP. The chain is dCTP deaminase from Shewanella oneidensis (strain ATCC 700550 / JCM 31522 / CIP 106686 / LMG 19005 / NCIMB 14063 / MR-1).